Consider the following 215-residue polypeptide: MTQALADMRRDYTRDGLSEAQAPDEPFALFHQWFADAVKTEQPPVEANAMTLATVDQDGRPHCRILLLKGLDAQGFTFFTNYQSAKGQQLAARPFAAMTFFWPTLERQVRIEGRVVKVTPEESDAYYQVRPLGSRLGAWASPQSQVIRDREELQDLLKATEQRFSDTQPDCPEHWGGYRLLPERIEFWQGRASRLHDRLNYRLQDSQWTRERLAP.

Residues 9-12 and lysine 69 each bind substrate; that span reads RRDY. Residues 64–69, 79–80, lysine 86, and glutamine 108 contribute to the FMN site; these read RILLLK and FT. Substrate-binding residues include tyrosine 126, arginine 130, and serine 134. FMN-binding positions include 143 to 144 and tryptophan 188; that span reads QS. 194–196 is a binding site for substrate; it reads RLH. Arginine 198 lines the FMN pocket.

It belongs to the pyridoxamine 5'-phosphate oxidase family. Homodimer. FMN serves as cofactor.

It catalyses the reaction pyridoxamine 5'-phosphate + O2 + H2O = pyridoxal 5'-phosphate + H2O2 + NH4(+). The catalysed reaction is pyridoxine 5'-phosphate + O2 = pyridoxal 5'-phosphate + H2O2. It participates in cofactor metabolism; pyridoxal 5'-phosphate salvage; pyridoxal 5'-phosphate from pyridoxamine 5'-phosphate: step 1/1. It functions in the pathway cofactor metabolism; pyridoxal 5'-phosphate salvage; pyridoxal 5'-phosphate from pyridoxine 5'-phosphate: step 1/1. In terms of biological role, catalyzes the oxidation of either pyridoxine 5'-phosphate (PNP) or pyridoxamine 5'-phosphate (PMP) into pyridoxal 5'-phosphate (PLP). The chain is Pyridoxine/pyridoxamine 5'-phosphate oxidase from Pseudomonas fluorescens (strain SBW25).